A 217-amino-acid chain; its full sequence is U exon protein (217 aa).

Disordered regions lie at residues 68–110 and 170–217; these read SKIF…TNHG and EKEA…RQGR. Polar residues predominate over residues 202-217; sequence GGFQQPTGANQARQGR.

It belongs to the adenoviridae U exon protein family.

It localises to the host nucleus. It is found in the host nucleoplasm. The protein localises to the host nucleolus. Functionally, might play a role in viral replication since it is associated with viral replication centers. Seems to have an effect on DBP localization. The sequence is that of U exon protein from Homo sapiens (Human).